The sequence spans 67 residues: MILKPSKPYSFCFTTYPWKKLKLKEHSKVIIKIIDEEEIEKILDSMIIEKVEGIDYKKLKETHYESL.

Belongs to the UPF0165 family.

Possibly the antitoxin component of a type II toxin-antitoxin (TA) system. The protein is Putative antitoxin PF1308 of Pyrococcus furiosus (strain ATCC 43587 / DSM 3638 / JCM 8422 / Vc1).